The sequence spans 604 residues: Membrane protein insertase YidC (604 aa).

The helical transmembrane segment at 8 to 28 (LYLAIGLSLLVLIGWNYFFAG) threads the bilayer. The tract at residues 42–84 (EQQAQTQTTSDTTARSDLNVPGQRSLPGESPQTQLSRPEALAA) is disordered. Over residues 43-58 (QQAQTQTTSDTTARSD) the composition is skewed to low complexity. 5 helical membrane-spanning segments follow: residues 349–369 (FDLL…FWIL), 375–395 (VVGN…AVFF), 449–469 (LPML…FVTI), 507–527 (MIGH…SMFF), and 546–566 (WMPV…VIYW).

Belongs to the OXA1/ALB3/YidC family. Type 1 subfamily. Interacts with the Sec translocase complex via SecD. Specifically interacts with transmembrane segments of nascent integral membrane proteins during membrane integration.

The protein localises to the cell inner membrane. In terms of biological role, required for the insertion and/or proper folding and/or complex formation of integral membrane proteins into the membrane. Involved in integration of membrane proteins that insert both dependently and independently of the Sec translocase complex, as well as at least some lipoproteins. Aids folding of multispanning membrane proteins. The sequence is that of Membrane protein insertase YidC from Beijerinckia indica subsp. indica (strain ATCC 9039 / DSM 1715 / NCIMB 8712).